We begin with the raw amino-acid sequence, 369 residues long: 3-dehydroquinate synthase (369 aa).

NAD(+) is bound by residues 75-80 (DGEEHK), 109-113 (GVIGD), 133-134 (TT), Lys-146, Lys-155, and 173-176 (TLKT). Zn(2+)-binding residues include Glu-188, His-251, and His-268.

Belongs to the sugar phosphate cyclases superfamily. Dehydroquinate synthase family. Requires Co(2+) as cofactor. Zn(2+) serves as cofactor. NAD(+) is required as a cofactor.

Its subcellular location is the cytoplasm. The catalysed reaction is 7-phospho-2-dehydro-3-deoxy-D-arabino-heptonate = 3-dehydroquinate + phosphate. It functions in the pathway metabolic intermediate biosynthesis; chorismate biosynthesis; chorismate from D-erythrose 4-phosphate and phosphoenolpyruvate: step 2/7. Catalyzes the conversion of 3-deoxy-D-arabino-heptulosonate 7-phosphate (DAHP) to dehydroquinate (DHQ). The sequence is that of 3-dehydroquinate synthase from Legionella pneumophila (strain Paris).